Here is a 159-residue protein sequence, read N- to C-terminus: 3-dehydroquinate dehydratase (159 aa).

Tyrosine 22 serves as the catalytic Proton acceptor. Positions 73, 79, and 86 each coordinate substrate. The Proton donor role is filled by histidine 99. Residues 100-101 (IS) and arginine 110 each bind substrate.

Belongs to the type-II 3-dehydroquinase family. In terms of assembly, homododecamer.

The catalysed reaction is 3-dehydroquinate = 3-dehydroshikimate + H2O. The protein operates within metabolic intermediate biosynthesis; chorismate biosynthesis; chorismate from D-erythrose 4-phosphate and phosphoenolpyruvate: step 3/7. Functionally, catalyzes a trans-dehydration via an enolate intermediate. The polypeptide is 3-dehydroquinate dehydratase (Campylobacter jejuni subsp. doylei (strain ATCC BAA-1458 / RM4099 / 269.97)).